Reading from the N-terminus, the 73-residue chain is Beta-defensin 39 (73 aa).

The N-terminal stretch at 1–23 is a signal peptide; the sequence is MKISCFLLLVLSLSCFQINSVSG. Cystine bridges form between Cys-29–Cys-58, Cys-36–Cys-51, and Cys-41–Cys-59.

This sequence belongs to the beta-defensin family.

It is found in the secreted. Its function is as follows. Has antibacterial activity. The protein is Beta-defensin 39 (Defb39) of Rattus norvegicus (Rat).